An 81-amino-acid polypeptide reads, in one-letter code: Acyl carrier protein (81 aa).

Residues Ala2–Gln80 enclose the Carrier domain. O-(pantetheine 4'-phosphoryl)serine is present on Ser40.

This sequence belongs to the acyl carrier protein (ACP) family. Post-translationally, 4'-phosphopantetheine is transferred from CoA to a specific serine of apo-ACP by AcpS. This modification is essential for activity because fatty acids are bound in thioester linkage to the sulfhydryl of the prosthetic group.

It localises to the cytoplasm. The protein operates within lipid metabolism; fatty acid biosynthesis. Its function is as follows. Carrier of the growing fatty acid chain in fatty acid biosynthesis. The polypeptide is Acyl carrier protein (Renibacterium salmoninarum (strain ATCC 33209 / DSM 20767 / JCM 11484 / NBRC 15589 / NCIMB 2235)).